Consider the following 81-residue polypeptide: MSELFSTPDHTLDALGLRCPEPVMMVRKTVRTMPVGETLLIIADDPATTRDIPGFCRFMEHELVAQETEALPYRYLIRKSH.

C19 acts as the Cysteine persulfide intermediate in catalysis.

The protein belongs to the sulfur carrier protein TusA family. Interacts with IscS.

It localises to the cytoplasm. It functions in the pathway tRNA modification. Sulfur carrier protein involved in sulfur trafficking in the cell. Part of a sulfur-relay system required for 2-thiolation during synthesis of 2-thiouridine of the modified wobble base 5-methylaminomethyl-2-thiouridine (mnm(5)s(2)U) in tRNA. Interacts with IscS and stimulates its cysteine desulfurase activity. Accepts an activated sulfur from IscS, which is then transferred to TusD, and thus determines the direction of sulfur flow from IscS to 2-thiouridine formation. Also appears to be involved in sulfur transfer for the biosynthesis of molybdopterin. This chain is Sulfur carrier protein TusA, found in Klebsiella pneumoniae subsp. pneumoniae (strain ATCC 700721 / MGH 78578).